Here is a 323-residue protein sequence, read N- to C-terminus: L-lactate dehydrogenase (323 aa).

NAD(+) contacts are provided by residues Val16, Asn37, and Gly81–Ala82. Residues Gln84, Arg90, and Asn122–Asp125 contribute to the substrate site. Residues Ala120–Asn122 and Ser145 each bind NAD(+). Substrate is bound at residue Asp150–Arg153. Catalysis depends on His177, which acts as the Proton acceptor. Tyr221 is subject to Phosphotyrosine. Thr230 contributes to the substrate binding site.

This sequence belongs to the LDH/MDH superfamily. LDH family. Homotetramer.

It is found in the cytoplasm. It catalyses the reaction (S)-lactate + NAD(+) = pyruvate + NADH + H(+). It functions in the pathway fermentation; pyruvate fermentation to lactate; (S)-lactate from pyruvate: step 1/1. In terms of biological role, catalyzes the conversion of lactate to pyruvate. The polypeptide is L-lactate dehydrogenase (Limosilactobacillus reuteri (Lactobacillus reuteri)).